The sequence spans 366 residues: Aminomethyltransferase (366 aa).

It belongs to the GcvT family. As to quaternary structure, the glycine cleavage system is composed of four proteins: P, T, L and H.

It catalyses the reaction N(6)-[(R)-S(8)-aminomethyldihydrolipoyl]-L-lysyl-[protein] + (6S)-5,6,7,8-tetrahydrofolate = N(6)-[(R)-dihydrolipoyl]-L-lysyl-[protein] + (6R)-5,10-methylene-5,6,7,8-tetrahydrofolate + NH4(+). In terms of biological role, the glycine cleavage system catalyzes the degradation of glycine. The polypeptide is Aminomethyltransferase (Bacillus cereus (strain B4264)).